The chain runs to 126 residues: MSALKQIKFDEKGLIPAISQDFKTGEILMFAWMNQESLKLTIKKQQAVYYSRSRQKIWFKGEESGHIQHIKEIFTDCDNDVILLKIEQIGGISCHTGRISCFFQQLDKKNWKIITNMIKNPRDIYG.

D76 contacts Mg(2+). C77 contacts Zn(2+). The Mg(2+) site is built by D78 and D80. The Zn(2+) site is built by C94 and C101.

The protein belongs to the PRA-CH family. As to quaternary structure, homodimer. Mg(2+) is required as a cofactor. Requires Zn(2+) as cofactor.

The protein localises to the cytoplasm. It catalyses the reaction 1-(5-phospho-beta-D-ribosyl)-5'-AMP + H2O = 1-(5-phospho-beta-D-ribosyl)-5-[(5-phospho-beta-D-ribosylamino)methylideneamino]imidazole-4-carboxamide. It functions in the pathway amino-acid biosynthesis; L-histidine biosynthesis; L-histidine from 5-phospho-alpha-D-ribose 1-diphosphate: step 3/9. Functionally, catalyzes the hydrolysis of the adenine ring of phosphoribosyl-AMP. The chain is Phosphoribosyl-AMP cyclohydrolase from Vesicomyosocius okutanii subsp. Calyptogena okutanii (strain HA).